The chain runs to 296 residues: Polyamine aminopropyltransferase (296 aa).

The region spanning 16 to 251 (HLWYFEYYTG…GMWSYTFASK (236 aa)) is the PABS domain. An S-methyl-5'-thioadenosine-binding site is contributed by Gln46. Residues His77 and Asp101 each contribute to the spermidine site. S-methyl-5'-thioadenosine is bound by residues Glu121 and 152–153 (NG). The active-site Proton acceptor is the Asp170. 170–173 (DSTD) serves as a coordination point for spermidine.

This sequence belongs to the spermidine/spermine synthase family. As to quaternary structure, homotetramer.

It localises to the cytoplasm. It carries out the reaction S-adenosyl 3-(methylsulfanyl)propylamine + putrescine = S-methyl-5'-thioadenosine + spermidine + H(+). Its pathway is amine and polyamine biosynthesis; spermidine biosynthesis; spermidine from putrescine: step 1/1. With respect to regulation, strongly inhibited by S-adenosyl-1,8-diamino-3-thiooctane. Functionally, catalyzes the irreversible transfer of a propylamine group from the amino donor S-adenosylmethioninamine (decarboxy-AdoMet) to putrescine (1,4-diaminobutane) to yield spermidine. It has lower affinity and lower activity towards 1,3-diaminopropane, cadaverine (1,5-diaminopentane), agmatine, norspermidine and spermidine (in vitro). The polypeptide is Polyamine aminopropyltransferase (Thermotoga maritima (strain ATCC 43589 / DSM 3109 / JCM 10099 / NBRC 100826 / MSB8)).